The sequence spans 314 residues: Methionyl-tRNA formyltransferase (314 aa).

(6S)-5,6,7,8-tetrahydrofolate is bound at residue 113–116 (SLLP).

Belongs to the Fmt family.

The catalysed reaction is L-methionyl-tRNA(fMet) + (6R)-10-formyltetrahydrofolate = N-formyl-L-methionyl-tRNA(fMet) + (6S)-5,6,7,8-tetrahydrofolate + H(+). Attaches a formyl group to the free amino group of methionyl-tRNA(fMet). The formyl group appears to play a dual role in the initiator identity of N-formylmethionyl-tRNA by promoting its recognition by IF2 and preventing the misappropriation of this tRNA by the elongation apparatus. The chain is Methionyl-tRNA formyltransferase from Chlorobaculum tepidum (strain ATCC 49652 / DSM 12025 / NBRC 103806 / TLS) (Chlorobium tepidum).